The primary structure comprises 162 residues: Flagellar assembly factor FliW (162 aa).

Belongs to the FliW family. Interacts with translational regulator CsrA and flagellin(s).

The protein resides in the cytoplasm. Its function is as follows. Acts as an anti-CsrA protein, binds CsrA and prevents it from repressing translation of its target genes, one of which is flagellin. Binds to flagellin and participates in the assembly of the flagellum. The chain is Flagellar assembly factor FliW from Magnetococcus marinus (strain ATCC BAA-1437 / JCM 17883 / MC-1).